The primary structure comprises 328 residues: Phenylalanine--tRNA ligase alpha subunit (328 aa).

Position 253 (E253) interacts with Mg(2+).

This sequence belongs to the class-II aminoacyl-tRNA synthetase family. Phe-tRNA synthetase alpha subunit type 1 subfamily. As to quaternary structure, tetramer of two alpha and two beta subunits. Mg(2+) serves as cofactor.

It localises to the cytoplasm. It catalyses the reaction tRNA(Phe) + L-phenylalanine + ATP = L-phenylalanyl-tRNA(Phe) + AMP + diphosphate + H(+). The chain is Phenylalanine--tRNA ligase alpha subunit from Chromobacterium violaceum (strain ATCC 12472 / DSM 30191 / JCM 1249 / CCUG 213 / NBRC 12614 / NCIMB 9131 / NCTC 9757 / MK).